Reading from the N-terminus, the 108-residue chain is MADSDKHGDEGPSTGVVVKAKPKTKKPSMYKVLMLNDDYTPMEFVVHVLERFFNKNREEATRIMLHVHRRGVGVCGVFTYEVAETKVTQVMDFARQHQHPLQCTLEKD.

Residues 1 to 10 (MADSDKHGDE) are compositionally biased toward basic and acidic residues. Residues 1–21 (MADSDKHGDEGPSTGVVVKAK) form a disordered region.

The protein belongs to the ClpS family. Binds to the N-terminal domain of the chaperone ClpA.

In terms of biological role, involved in the modulation of the specificity of the ClpAP-mediated ATP-dependent protein degradation. The protein is ATP-dependent Clp protease adapter protein ClpS of Rhodospirillum centenum (strain ATCC 51521 / SW).